A 631-amino-acid chain; its full sequence is Pro-interleukin-16 (631 aa).

2 disordered regions span residues 30 to 269 and 317 to 344; these read ENPG…FPLT and PKEG…ASDT. Positions 132–144 are enriched in low complexity; that stretch reads SSSSSSIKQRISS. Residue serine 221 is modified to Phosphoserine. Residues 322 to 344 are compositionally biased toward polar residues; sequence SPTSSSNEDSAANGSAETSASDT. The interval 405-501 is interaction with PPP1R12A, PPP1R12B and PPP1R12C; it reads KQLDSIHVTI…IVTRKLTAES (97 aa). PDZ domains lie at 411-496 and 533-618; these read HVTI…VTRK and TVTL…IRRK.

As to quaternary structure, homotetramer. Pro-interleukin-16 interacts (via PDZ 2 domain) with PPP1R12A, PPP1R12B and PPP1R12C. Pro-interleukin-16 interacts with GRIN2A. Pro-interleukin-16 interacts with GABPB1. Pro-interleukin-16 interacts (via PDZ 3 domain) with HDAC3.

Its subcellular location is the secreted. It localises to the cytoplasm. The protein localises to the nucleus. Interleukin-16 stimulates a migratory response in CD4+ lymphocytes, monocytes, and eosinophils. Primes CD4+ T-cells for IL-2 and IL-15 responsiveness. Also induces T-lymphocyte expression of interleukin 2 receptor. Ligand for CD4. Functionally, pro-interleukin-16 is involved in cell cycle progression in T-cells. Appears to be involved in transcriptional regulation of SKP2 and is probably part of a transcriptional repression complex on the core promoter of the SKP2 gene. May act as a scaffold for GABPB1 (the DNA-binding subunit the GABP transcription factor complex) and HDAC3 thus maintaining transcriptional repression and blocking cell cycle progression in resting T-cells. This is Pro-interleukin-16 (IL16) from Chlorocebus aethiops (Green monkey).